The following is an 874-amino-acid chain: Alanine--tRNA ligase (874 aa).

Residues histidine 563, histidine 567, cysteine 665, and histidine 669 each coordinate Zn(2+).

This sequence belongs to the class-II aminoacyl-tRNA synthetase family. The cofactor is Zn(2+).

The protein resides in the cytoplasm. The catalysed reaction is tRNA(Ala) + L-alanine + ATP = L-alanyl-tRNA(Ala) + AMP + diphosphate. In terms of biological role, catalyzes the attachment of alanine to tRNA(Ala) in a two-step reaction: alanine is first activated by ATP to form Ala-AMP and then transferred to the acceptor end of tRNA(Ala). Also edits incorrectly charged Ser-tRNA(Ala) and Gly-tRNA(Ala) via its editing domain. This is Alanine--tRNA ligase from Histophilus somni (strain 129Pt) (Haemophilus somnus).